The chain runs to 87 residues: uncharacterized protein (87 aa).

The chain crosses the membrane as a helical span at residues 25-47 (FFWEVCNMILFIIIALCGYLLFS).

The protein resides in the membrane. This is an uncharacterized protein from Bacillus subtilis (strain 168).